The primary structure comprises 192 residues: MSRIELGGVLGKTFGKVHHRLISRVSEAGVALAKTVPGFEQFMISSQRRGLTYSVFKGKKNIGVDDLGFPVTGDVIRIVPVIIGSKKAGVLQTILGAVLVAVGVVLNFTPWAAASPFFYKLGAAVMLGGVVQMLSPQPAGLASKQSSDNRASYAFGGVTNTAAQGYPVPLLYGRRRIGGAIISAGIYVEDQQ.

It belongs to the lambda-like tail tip protein I family.

Its subcellular location is the host cytoplasm. In terms of biological role, plays a role in tail tip complex assembly. The tail tip complex is assembled successively with three tail tip proteins J, one tail tip protein I, one tail tip protein L and one tail tip protein K. The tail tip complex interacts with tail measure protein to initiate tail tube assembly. The formation of the tail tip complex is completed by the addition of tail tip protein M, which is followed by tail tube polymerization. May be excluded form tail tip during maturation and would be absent from virions. The protein is Tail tip assembly protein I of Escherichia phage N15 (Bacteriophage N15).